The following is a 259-amino-acid chain: MASSSHRYFALLALFAVSLKFCYCQNETTDGAGWGTAGVTWYGEPLGAGSTGGACGFAVANPPLYGMVSAGGPSVFNNGIGCGTCFQILCNGHPACSRRPITVTITDECPGGPCASEPAHFDLSGKAMGALARPGQGDRLRSAGVLRVYYIRVECLYRRTNIAFRMDPGANPYYISFVVEYENGDGDLAYTEIQPAGGTFIPMQEMRSAVWKVNSGSPLTGPFNIRLTSAESHNVVVAYNVIPANWKPNETYRSVVNFK.

A signal peptide spans Met1–Cys24. Asn26 carries an N-linked (GlcNAc...) asparagine glycan. The Expansin-like EG45 domain maps to Gly52–Thr160. Disulfide bonds link Cys55-Cys82, Cys85-Cys155, and Cys90-Cys96. An Expansin-like CBD domain is found at Tyr173 to Ser254. Asn249 carries an N-linked (GlcNAc...) asparagine glycan.

It belongs to the expansin family. Expansin B subfamily.

The protein resides in the secreted. It localises to the cell wall. It is found in the membrane. May cause loosening and extension of plant cell walls by disrupting non-covalent bonding between cellulose microfibrils and matrix glucans. This is Expansin-B6 from Arabidopsis thaliana (Mouse-ear cress).